A 160-amino-acid polypeptide reads, in one-letter code: Snaclec subunit A (160 aa).

A signal peptide spans 1-23 (MGRFILVNLGLLVVAFSLRGSEA). Cystine bridges form between Cys25-Cys36, Cys53-Cys150, and Cys125-Cys142. The region spanning 32-151 (YDKYCYKVFD…CDFTLPFICK (120 aa)) is the C-type lectin domain.

This sequence belongs to the snaclec family. As to quaternary structure, heterodimer of subunits A and B; disulfide-linked. In terms of tissue distribution, expressed by the venom gland.

The protein localises to the secreted. Interferes with one step of hemostasis (modulation of platelet aggregation, or coagulation cascade, for example). The polypeptide is Snaclec subunit A (Philodryas olfersii (Green snake)).